Reading from the N-terminus, the 372-residue chain is Prostaglandin E synthase 2 (372 aa).

The Lumenal portion of the chain corresponds to 1–54 (MAHAVRALWPHGRALAWRLGDRPALGLHAQSRAGFTGAAGGSGPAATARKGGPR). Residues 55 to 71 (LLGAAALALGGALGLYH) form a helical membrane-spanning segment. Residues 72–372 (TARWHLRAQD…VEKAIAEAPQ (301 aa)) are Cytoplasmic-facing. The 104-residue stretch at 87 to 190 (SATQLSLSSR…DIITYYPPMK (104 aa)) folds into the Glutaredoxin domain. S92 is modified (phosphoserine). Glutathione is bound by residues V145 and 161–162 (DS). The GST C-terminal domain maps to 259–372 (DYIVKEGNFG…VEKAIAEAPQ (114 aa)).

This sequence belongs to the GST superfamily. May interact with CEBPB. Interacts with EXOSC10. Homodimer. Synthesized as a Golgi membrane-associated protein, and the proteolytic removal of the N-terminal hydrophobic domain leads to the formation of a mature cytosolic enzyme. Detected in heart (at protein level). Widely expressed. Expressed in heart &gt; kidney &gt; muscle &gt; testis &gt; endometrium = ovary &gt; myometrium = spleen = lung. In endometrium, it is mainly expressed in luminal epithelial cells followed by glandular epithelial cells, but expression is also present in stromal cells at a lower level.

The protein localises to the microsome membrane. It is found in the cytoplasm. It catalyses the reaction prostaglandin H2 = prostaglandin E2. The enzyme catalyses prostaglandin H2 = (12S)-hydroxy-(5Z,8E,10E)-heptadecatrienoate + malonaldehyde. It participates in lipid metabolism; prostaglandin biosynthesis. Its activity is regulated as follows. Isomerase activity is increased by sulfhydril compounds. Dithiothreitol (DTT) is most effective, followed by glutathione (GSH) and 2-mercaptoethanol. Its function is as follows. Isomerase that catalyzes the conversion of PGH2 into the more stable prostaglandin E2 (PGE2) (in vitro). The biological function and the GSH-dependent property of PTGES2 is still under debate. In vivo, PTGES2 could form a complex with GSH and heme and would not participate in PGE2 synthesis but would catalyze the degradation of prostaglandin E2 H2 (PGH2) to 12(S)-hydroxy-5(Z),8(E),10(E)-heptadecatrienoic acid (HHT) and malondialdehyde (MDA). In Bos taurus (Bovine), this protein is Prostaglandin E synthase 2 (PTGES2).